A 197-amino-acid chain; its full sequence is Ribonuclease HII (197 aa).

The RNase H type-2 domain occupies 11–197; sequence HLIAGVDEVG…FAPVKKILGL (187 aa). Positions 17, 18, and 109 each coordinate a divalent metal cation.

Belongs to the RNase HII family. Mn(2+) is required as a cofactor. Requires Mg(2+) as cofactor.

The protein localises to the cytoplasm. The enzyme catalyses Endonucleolytic cleavage to 5'-phosphomonoester.. Endonuclease that specifically degrades the RNA of RNA-DNA hybrids. The polypeptide is Ribonuclease HII (Actinobacillus pleuropneumoniae serotype 7 (strain AP76)).